A 170-amino-acid polypeptide reads, in one-letter code: Adenine phosphoribosyltransferase (170 aa).

It belongs to the purine/pyrimidine phosphoribosyltransferase family. Homodimer.

It localises to the cytoplasm. The catalysed reaction is AMP + diphosphate = 5-phospho-alpha-D-ribose 1-diphosphate + adenine. Its pathway is purine metabolism; AMP biosynthesis via salvage pathway; AMP from adenine: step 1/1. Catalyzes a salvage reaction resulting in the formation of AMP, that is energically less costly than de novo synthesis. The sequence is that of Adenine phosphoribosyltransferase from Geobacillus thermodenitrificans (strain NG80-2).